The chain runs to 182 residues: uncharacterized protein (182 aa).

Positions Leu-36–Leu-164 constitute a Nudix hydrolase domain. Positions Gly-73–Gly-95 match the Nudix box motif. 2 residues coordinate Mg(2+): Glu-89 and Glu-93.

Belongs to the Nudix hydrolase family. Requires Mg(2+) as cofactor.

This is an uncharacterized protein from Yersinia pestis.